Here is a 75-residue protein sequence, read N- to C-terminus: uncharacterized protein (75 aa).

This is an uncharacterized protein from Escherichia coli (strain K12).